The primary structure comprises 931 residues: Semaphorin-6C (931 aa).

The signal sequence occupies residues 1–25 (MPRAPHSMPLLLLLLLLSSLPQAQA). Residues 26-605 (AFPQDPTPLL…ASASRSIPIP (580 aa)) lie on the Extracellular side of the membrane. The Sema domain maps to 31 to 517 (PTPLLTSDLQ…FPGCIVYLSL (487 aa)). Asparagine 71 is a glycosylation site (N-linked (GlcNAc...) asparagine). 4 cysteine pairs are disulfide-bonded: cysteine 112/cysteine 122, cysteine 140/cysteine 149, cysteine 263/cysteine 374, and cysteine 288/cysteine 333. Asparagine 287 carries an N-linked (GlcNAc...) asparagine glycan. Asparagine 438 is a glycosylation site (N-linked (GlcNAc...) asparagine). Disulfide bonds link cysteine 480–cysteine 511, cysteine 520–cysteine 538, cysteine 526–cysteine 571, and cysteine 530–cysteine 546. Residues 556 to 591 (DVDLTGNQESTEHGDCQDGATGSQSGPGDSAYGVRR) form a disordered region. A helical membrane pass occupies residues 606 to 626 (LLLACVAAAFALGASVSGLLV). Residues 627–931 (SCACRRANRR…PAPHGGHFNF (305 aa)) lie on the Cytoplasmic side of the membrane. 2 disordered regions span residues 655 to 747 (LARL…GGPA) and 777 to 931 (HGPQ…HFNF). Positions 693-708 (PPELACLPTPETTPEL) are enriched in low complexity. The span at 893 to 906 (PEGHRGRSLKRVDV) shows a compositional bias: basic and acidic residues. Residues 911–923 (SPKPPLASPPQPA) show a composition bias toward pro residues.

The protein belongs to the semaphorin family.

Its subcellular location is the cell membrane. In terms of biological role, may be a stop signal for the dorsal root ganglion neurons in their target areas, and possibly also for other neurons. May also be involved in the maintenance and remodeling of neuronal connections. This Mus musculus (Mouse) protein is Semaphorin-6C (Sema6c).